Reading from the N-terminus, the 624-residue chain is APC membrane recruitment protein 2 (624 aa).

Disordered stretches follow at residues 1–308 (MDSH…PPSE) and 342–596 (EDVG…IPVS). The segment covering 74-91 (SGKKEDAGGGEAQGKDAP) has biased composition (basic and acidic residues). The span at 101–111 (SASSSVAKSHS) shows a compositional bias: low complexity. 2 stretches are compositionally biased toward basic and acidic residues: residues 120-132 (GRPE…ENAE) and 247-258 (RRLEELCGERPD). 2 stretches are compositionally biased toward low complexity: residues 272 to 282 (ITGDIPITTIP) and 295 to 307 (AAAP…DPPS). Residues 406–416 (TGGGGGGGGGT) are compositionally biased toward gly residues. The span at 450–464 (NNKEEQKGREKEQHE) shows a compositional bias: basic and acidic residues. Residues 535–549 (PITTTCSLKTPSSTV) are compositionally biased toward polar residues.

This sequence belongs to the Amer family.

It is found in the cell membrane. Its function is as follows. Negative regulator of the canonical Wnt signaling pathway involved in neuroectodermal patterning. Acts by specifically binding phosphatidylinositol 4,5-bisphosphate (PtdIns(4,5)P2), translocating to the cell membrane and interacting with key regulators of the canonical Wnt signaling pathway, such as components of the beta-catenin destruction complex. The sequence is that of APC membrane recruitment protein 2 (AMER2) from Gallus gallus (Chicken).